The primary structure comprises 116 residues: Ribosome-binding factor A (116 aa).

Belongs to the RbfA family. As to quaternary structure, monomer. Binds 30S ribosomal subunits, but not 50S ribosomal subunits or 70S ribosomes.

Its subcellular location is the cytoplasm. One of several proteins that assist in the late maturation steps of the functional core of the 30S ribosomal subunit. Associates with free 30S ribosomal subunits (but not with 30S subunits that are part of 70S ribosomes or polysomes). Required for efficient processing of 16S rRNA. May interact with the 5'-terminal helix region of 16S rRNA. This chain is Ribosome-binding factor A, found in Halalkalibacterium halodurans (strain ATCC BAA-125 / DSM 18197 / FERM 7344 / JCM 9153 / C-125) (Bacillus halodurans).